A 234-amino-acid chain; its full sequence is Sugar fermentation stimulation protein homolog (234 aa).

The protein belongs to the SfsA family.

The protein is Sugar fermentation stimulation protein homolog of Shewanella pealeana (strain ATCC 700345 / ANG-SQ1).